Here is a 211-residue protein sequence, read N- to C-terminus: GTP pyrophosphokinase YjbM (211 aa).

Residues 21–28, 41–42, and 46–48 each bind guanosine 3'-diphosphate 5'-triphosphate; these read KVKLKGIR, EF, and RVK. ATP is bound by residues 46–48, Ser-52, 56–59, Asp-72, and Arg-77; these read RVK and KARR. A guanosine 3'-diphosphate 5'-triphosphate-binding site is contributed by Arg-59. Asp-72 is a binding site for Mg(2+). Residues Arg-105, 112-114, and His-120 each bind guanosine 3'-diphosphate 5'-triphosphate; that span reads KES. The active-site Proton acceptor is the Glu-139. Guanosine 3'-diphosphate 5'-triphosphate contacts are provided by residues Asn-148 and 151-155; that span reads ATIEH.

It belongs to the RelA/SpoT family. As to quaternary structure, homotetramer.

The enzyme catalyses GTP + ATP = guanosine 3'-diphosphate 5'-triphosphate + AMP. It catalyses the reaction GDP + ATP = guanosine 3',5'-bis(diphosphate) + AMP. Its pathway is purine metabolism; ppGpp biosynthesis; ppGpp from GTP: step 1/2. With respect to regulation, allosterically regulated by its own products; pppGpp simulates synthesis 10-fold more than ppGpp. 2 pppGpp molecules bind in a regulatory cleft in the middle of the tetramer in an asymmetric manner. There is a specific contact of Lys-25 to the gamma-phosphate of pppGpp, explaining why pppGpp stimulates activity but ppGpp does not. Functions as a (p)ppGpp synthase; GDP can be used instead of GTP, resulting in an increase of (p)ppGpp synthesis. The enzyme binds ATP, then GDP or GTP and catalysis is highly cooperative. In eubacteria ppGpp (guanosine 3'-diphosphate 5'-diphosphate) is a mediator of the stringent response that coordinates a variety of cellular activities in response to changes in nutritional abundance. Probably has a minor role in the stringent response. The chain is GTP pyrophosphokinase YjbM (yjbM) from Bacillus subtilis (strain 168).